A 248-amino-acid chain; its full sequence is 3-deoxy-manno-octulosonate cytidylyltransferase (248 aa).

It belongs to the KdsB family.

Its subcellular location is the cytoplasm. The catalysed reaction is 3-deoxy-alpha-D-manno-oct-2-ulosonate + CTP = CMP-3-deoxy-beta-D-manno-octulosonate + diphosphate. The protein operates within nucleotide-sugar biosynthesis; CMP-3-deoxy-D-manno-octulosonate biosynthesis; CMP-3-deoxy-D-manno-octulosonate from 3-deoxy-D-manno-octulosonate and CTP: step 1/1. It functions in the pathway bacterial outer membrane biogenesis; lipopolysaccharide biosynthesis. Activates KDO (a required 8-carbon sugar) for incorporation into bacterial lipopolysaccharide in Gram-negative bacteria. The polypeptide is 3-deoxy-manno-octulosonate cytidylyltransferase (Alteromonas mediterranea (strain DSM 17117 / CIP 110805 / LMG 28347 / Deep ecotype)).